A 937-amino-acid chain; its full sequence is Translation initiation factor IF-2 (937 aa).

Disordered stretches follow at residues 157 to 230 (KEAQ…AARK) and 250 to 346 (IKAP…ESNF). A compositionally biased stretch (basic and acidic residues) spans 173–205 (EAQKADAAKPVEAKADESAQEEKKRVAAEESKK). Over residues 252–265 (APEPAAPVAAKPAE) the composition is skewed to low complexity. The span at 267 to 293 (TLHKPADKKAGEKKDEKKPAVTADKKS) shows a compositional bias: basic and acidic residues. Residues 295–304 (KSANVSSTWQ) are compositionally biased toward polar residues. The tr-type G domain occupies 437–606 (PRAPVVTVMG…LLQAEVLELK (170 aa)). A G1 region spans residues 446–453 (GHVDHGKT). 446–453 (GHVDHGKT) serves as a coordination point for GTP. Residues 471 to 475 (GITQH) form a G2 region. Positions 492–495 (DTPG) are G3. Residues 492–496 (DTPGH) and 546–549 (NKID) each bind GTP. A G4 region spans residues 546–549 (NKID). Positions 582 to 584 (SAK) are G5.

This sequence belongs to the TRAFAC class translation factor GTPase superfamily. Classic translation factor GTPase family. IF-2 subfamily.

It is found in the cytoplasm. In terms of biological role, one of the essential components for the initiation of protein synthesis. Protects formylmethionyl-tRNA from spontaneous hydrolysis and promotes its binding to the 30S ribosomal subunits. Also involved in the hydrolysis of GTP during the formation of the 70S ribosomal complex. This chain is Translation initiation factor IF-2, found in Janthinobacterium sp. (strain Marseille) (Minibacterium massiliensis).